We begin with the raw amino-acid sequence, 271 residues long: Formamidopyrimidine-DNA glycosylase (271 aa).

P2 acts as the Schiff-base intermediate with DNA in catalysis. The active-site Proton donor is E3. K58 acts as the Proton donor; for beta-elimination activity in catalysis. Residues H92, R111, and K152 each contribute to the DNA site. The segment at 237–271 (YVYGKVQKPCKICNNTITLIRQNGRSTYFCNACQN) adopts an FPG-type zinc-finger fold. R261 (proton donor; for delta-elimination activity) is an active-site residue.

It belongs to the FPG family. As to quaternary structure, monomer. Zn(2+) serves as cofactor.

It carries out the reaction Hydrolysis of DNA containing ring-opened 7-methylguanine residues, releasing 2,6-diamino-4-hydroxy-5-(N-methyl)formamidopyrimidine.. The catalysed reaction is 2'-deoxyribonucleotide-(2'-deoxyribose 5'-phosphate)-2'-deoxyribonucleotide-DNA = a 3'-end 2'-deoxyribonucleotide-(2,3-dehydro-2,3-deoxyribose 5'-phosphate)-DNA + a 5'-end 5'-phospho-2'-deoxyribonucleoside-DNA + H(+). In terms of biological role, involved in base excision repair of DNA damaged by oxidation or by mutagenic agents. Acts as a DNA glycosylase that recognizes and removes damaged bases. Has a preference for oxidized purines, such as 7,8-dihydro-8-oxoguanine (8-oxoG). Has AP (apurinic/apyrimidinic) lyase activity and introduces nicks in the DNA strand. Cleaves the DNA backbone by beta-delta elimination to generate a single-strand break at the site of the removed base with both 3'- and 5'-phosphates. The chain is Formamidopyrimidine-DNA glycosylase from Wolbachia sp. subsp. Brugia malayi (strain TRS).